The chain runs to 292 residues: Probable endonuclease 4 (292 aa).

Zn(2+) is bound by residues His71, His111, Glu148, Asp182, His185, His217, Asp230, His232, and Glu262.

The protein belongs to the AP endonuclease 2 family. Zn(2+) is required as a cofactor.

The enzyme catalyses Endonucleolytic cleavage to 5'-phosphooligonucleotide end-products.. Functionally, endonuclease IV plays a role in DNA repair. It cleaves phosphodiester bonds at apurinic or apyrimidinic (AP) sites, generating a 3'-hydroxyl group and a 5'-terminal sugar phosphate. This Aster yellows witches'-broom phytoplasma (strain AYWB) protein is Probable endonuclease 4.